A 365-amino-acid chain; its full sequence is 3-dehydroquinate synthase (365 aa).

NAD(+) is bound by residues 72-77 (SGEKEK), 130-131 (TT), Lys142, and Lys151. Zn(2+) is bound by residues Glu184, His247, and His264.

It belongs to the sugar phosphate cyclases superfamily. Dehydroquinate synthase family. Co(2+) is required as a cofactor. It depends on Zn(2+) as a cofactor. Requires NAD(+) as cofactor.

The protein resides in the cytoplasm. It catalyses the reaction 7-phospho-2-dehydro-3-deoxy-D-arabino-heptonate = 3-dehydroquinate + phosphate. It participates in metabolic intermediate biosynthesis; chorismate biosynthesis; chorismate from D-erythrose 4-phosphate and phosphoenolpyruvate: step 2/7. In terms of biological role, catalyzes the conversion of 3-deoxy-D-arabino-heptulosonate 7-phosphate (DAHP) to dehydroquinate (DHQ). The protein is 3-dehydroquinate synthase of Bacillus cereus (strain AH187).